Consider the following 426-residue polypeptide: F-box protein At2g15640 (426 aa).

In terms of domain architecture, F-box spans 1–48 (MNPSTITNDLTVEILSRLPAKSVARFHCVSKQWGSIFGSPYFKELFLT).

This is F-box protein At2g15640 from Arabidopsis thaliana (Mouse-ear cress).